The primary structure comprises 367 residues: Peptide chain release factor 2 (367 aa).

Residue glutamine 254 is modified to N5-methylglutamine.

It belongs to the prokaryotic/mitochondrial release factor family. Methylated by PrmC. Methylation increases the termination efficiency of RF2.

The protein localises to the cytoplasm. In terms of biological role, peptide chain release factor 2 directs the termination of translation in response to the peptide chain termination codons UGA and UAA. This is Peptide chain release factor 2 from Acidovorax ebreus (strain TPSY) (Diaphorobacter sp. (strain TPSY)).